Reading from the N-terminus, the 101-residue chain is Small ribosomal subunit protein uS14A (101 aa).

The disordered stretch occupies residues 47–66; sequence ALASLPRDSNPNRVTNRCAL.

Belongs to the universal ribosomal protein uS14 family. Part of the 30S ribosomal subunit. Contacts proteins S3 and S10.

Functionally, binds 16S rRNA, required for the assembly of 30S particles and may also be responsible for determining the conformation of the 16S rRNA at the A site. The sequence is that of Small ribosomal subunit protein uS14A from Myxococcus xanthus (strain DK1622).